The chain runs to 209 residues: Large ribosomal subunit protein uL3 (209 aa).

The segment at 127–166 (NFGGGSRTHGQSDRLRAPGSVGGSSDPSRTFKGTRMAGRM) is disordered.

The protein belongs to the universal ribosomal protein uL3 family. As to quaternary structure, part of the 50S ribosomal subunit. Forms a cluster with proteins L14 and L19.

One of the primary rRNA binding proteins, it binds directly near the 3'-end of the 23S rRNA, where it nucleates assembly of the 50S subunit. The chain is Large ribosomal subunit protein uL3 from Chlorobaculum tepidum (strain ATCC 49652 / DSM 12025 / NBRC 103806 / TLS) (Chlorobium tepidum).